The sequence spans 85 residues: Cell division topological specificity factor (85 aa).

This sequence belongs to the MinE family.

In terms of biological role, prevents the cell division inhibition by proteins MinC and MinD at internal division sites while permitting inhibition at polar sites. This ensures cell division at the proper site by restricting the formation of a division septum at the midpoint of the long axis of the cell. This Shewanella sp. (strain ANA-3) protein is Cell division topological specificity factor.